Here is a 161-residue protein sequence, read N- to C-terminus: 3-isopropylmalate dehydratase small subunit (161 aa).

This sequence belongs to the LeuD family. LeuD type 2 subfamily. As to quaternary structure, heterodimer of LeuC and LeuD.

The enzyme catalyses (2R,3S)-3-isopropylmalate = (2S)-2-isopropylmalate. The protein operates within amino-acid biosynthesis; L-leucine biosynthesis; L-leucine from 3-methyl-2-oxobutanoate: step 2/4. Catalyzes the isomerization between 2-isopropylmalate and 3-isopropylmalate, via the formation of 2-isopropylmaleate. The protein is 3-isopropylmalate dehydratase small subunit of Clostridium beijerinckii (strain ATCC 51743 / NCIMB 8052) (Clostridium acetobutylicum).